A 587-amino-acid polypeptide reads, in one-letter code: Glutamine--tRNA ligase (587 aa).

Residues 58 to 68 (PEPNGYLHIGH) carry the 'HIGH' region motif. Residues 59–61 (EPN) and 65–71 (HIGHAKS) each bind ATP. Positions 91 and 240 each coordinate L-glutamine. ATP-binding positions include T259 and 294-295 (RL). The 'KMSKS' region signature appears at 301–305 (VTSKR).

Belongs to the class-I aminoacyl-tRNA synthetase family. In terms of assembly, monomer.

It is found in the cytoplasm. The catalysed reaction is tRNA(Gln) + L-glutamine + ATP = L-glutaminyl-tRNA(Gln) + AMP + diphosphate. This chain is Glutamine--tRNA ligase, found in Bordetella bronchiseptica (strain ATCC BAA-588 / NCTC 13252 / RB50) (Alcaligenes bronchisepticus).